Reading from the N-terminus, the 183-residue chain is MFQVEMTASVREAFGKGPMRRLRQQGITPAVVYGAGKAALPLQMDAKILMTQLLEFSRVNTVVSLSVDGQDAKNVVIAEIQSDPVTDALVHVDFCEIDLDQAREFTVPVTFEGTPKGVDLGGRLESHLTSVILKAKPLDIPNEFVINIADLAIDEQLTVADVALAENVVMVTPAARVMVAVLK.

It belongs to the bacterial ribosomal protein bL25 family. CTC subfamily. Part of the 50S ribosomal subunit; part of the 5S rRNA/L5/L18/L25 subcomplex. Contacts the 5S rRNA. Binds to the 5S rRNA independently of L5 and L18.

Functionally, this is one of the proteins that binds to the 5S RNA in the ribosome where it forms part of the central protuberance. The sequence is that of Large ribosomal subunit protein bL25 from Desulfotalea psychrophila (strain LSv54 / DSM 12343).